The following is a 338-amino-acid chain: (2Z,6E)-hedycaryol synthase (338 aa).

Mg(2+) is bound by residues Asp82 and Glu87. A DDXXXE motif motif is present at residues 82 to 87; it reads DDQIDE. Arg175 contributes to the substrate binding site. Asn221 and Ser225 together coordinate Mg(2+). Residues 221-229 carry the NXXXSXXXE motif motif; sequence NDVFSVERE. Arg228 provides a ligand contact to substrate. Glu229 contacts Mg(2+).

The protein belongs to the terpene synthase family. In terms of assembly, homodimer. Mg(2+) serves as cofactor.

The enzyme catalyses (2E,6E)-farnesyl diphosphate + H2O = (2Z,6E)-hedycaryol + diphosphate. The protein operates within secondary metabolite biosynthesis; terpenoid biosynthesis. Functionally, catalyzes the conversion of (2E,6E)-farnesyl diphosphate (FPP) into (2Z,6E)-hedycaryol via a 1,11-cyclization. This chain is (2Z,6E)-hedycaryol synthase, found in Kitasatospora setae (strain ATCC 33774 / DSM 43861 / JCM 3304 / KCC A-0304 / NBRC 14216 / KM-6054) (Streptomyces setae).